Reading from the N-terminus, the 338-residue chain is Secretion system apparatus protein SsaL (338 aa).

The polypeptide is Secretion system apparatus protein SsaL (ssaL) (Salmonella typhimurium (strain LT2 / SGSC1412 / ATCC 700720)).